The primary structure comprises 206 residues: Ribosomal RNA large subunit methyltransferase E (206 aa).

Residues glycine 55, tryptophan 57, aspartate 75, aspartate 91, and aspartate 116 each coordinate S-adenosyl-L-methionine. Lysine 156 (proton acceptor) is an active-site residue.

Belongs to the class I-like SAM-binding methyltransferase superfamily. RNA methyltransferase RlmE family.

The protein resides in the cytoplasm. The catalysed reaction is uridine(2552) in 23S rRNA + S-adenosyl-L-methionine = 2'-O-methyluridine(2552) in 23S rRNA + S-adenosyl-L-homocysteine + H(+). Its function is as follows. Specifically methylates the uridine in position 2552 of 23S rRNA at the 2'-O position of the ribose in the fully assembled 50S ribosomal subunit. The chain is Ribosomal RNA large subunit methyltransferase E from Blochmanniella floridana.